The primary structure comprises 215 residues: Large ribosomal subunit protein bL25 (215 aa).

Positions 192–203 (EEATEEEEEAAE) are enriched in acidic residues. Positions 192–215 (EEATEEEEEAAEPEVIKRKEEEEE) are disordered. The span at 205 to 215 (EVIKRKEEEEE) shows a compositional bias: basic and acidic residues.

Belongs to the bacterial ribosomal protein bL25 family. CTC subfamily. In terms of assembly, part of the 50S ribosomal subunit; part of the 5S rRNA/L5/L18/L25 subcomplex. Contacts the 5S rRNA. Binds to the 5S rRNA independently of L5 and L18.

In terms of biological role, this is one of the proteins that binds to the 5S RNA in the ribosome where it forms part of the central protuberance. This Thermotoga sp. (strain RQ2) protein is Large ribosomal subunit protein bL25.